A 97-amino-acid chain; its full sequence is Exodeoxyribonuclease 7 small subunit (97 aa).

Residues 64 to 97 (NGQLHPAEEKGDDVSNNGVQNQGYKSQFLDGDVF) form a disordered region. Positions 77–88 (VSNNGVQNQGYK) are enriched in polar residues.

It belongs to the XseB family. Heterooligomer composed of large and small subunits.

It is found in the cytoplasm. It carries out the reaction Exonucleolytic cleavage in either 5'- to 3'- or 3'- to 5'-direction to yield nucleoside 5'-phosphates.. Bidirectionally degrades single-stranded DNA into large acid-insoluble oligonucleotides, which are then degraded further into small acid-soluble oligonucleotides. This chain is Exodeoxyribonuclease 7 small subunit, found in Limosilactobacillus fermentum (strain NBRC 3956 / LMG 18251) (Lactobacillus fermentum).